A 64-amino-acid polypeptide reads, in one-letter code: SPbeta prophage-derived uncharacterized protein YopV (64 aa).

This chain is SPbeta prophage-derived uncharacterized protein YopV (yopV), found in Bacillus subtilis (strain 168).